The primary structure comprises 321 residues: Ubiquinone biosynthesis O-methyltransferase, mitochondrial (321 aa).

S-adenosyl-L-methionine contacts are provided by Arg-102, Gly-135, Asp-157, and Leu-210. Mg(2+) is bound by residues Glu-211, Glu-214, and His-215.

This sequence belongs to the class I-like SAM-binding methyltransferase superfamily. UbiG/COQ3 family. Component of a multi-subunit COQ enzyme complex. Mg(2+) serves as cofactor.

The protein localises to the mitochondrion inner membrane. It catalyses the reaction a 3,4-dihydroxy-5-(all-trans-polyprenyl)benzoate + S-adenosyl-L-methionine = a 4-hydroxy-3-methoxy-5-(all-trans-polyprenyl)benzoate + S-adenosyl-L-homocysteine + H(+). The enzyme catalyses a 3-demethylubiquinone + S-adenosyl-L-methionine = a ubiquinone + S-adenosyl-L-homocysteine. It carries out the reaction a 3-demethylubiquinol + S-adenosyl-L-methionine = a ubiquinol + S-adenosyl-L-homocysteine + H(+). It functions in the pathway cofactor biosynthesis; ubiquinone biosynthesis. O-methyltransferase required for two non-consecutive steps during ubiquinone biosynthesis. Catalyzes the 2 O-methylation of 3,4-dihydroxy-5-(all-trans-polyprenyl)benzoic acid into 4-hydroxy-3-methoxy-5-(all-trans-polyprenyl)benzoic acid. Also catalyzes the last step of ubiquinone biosynthesis by mediating methylation of 3-demethylubiquinone into ubiquinone. Also able to mediate the methylation of 3-demethylubiquinol into ubiquinol. This Dictyostelium discoideum (Social amoeba) protein is Ubiquinone biosynthesis O-methyltransferase, mitochondrial.